Consider the following 72-residue polypeptide: Translation initiation factor IF-1 (72 aa).

The 72-residue stretch at 1–72 (MAKEEAIEIE…SKGRITYRYK (72 aa)) folds into the S1-like domain.

The protein belongs to the IF-1 family. In terms of assembly, component of the 30S ribosomal translation pre-initiation complex which assembles on the 30S ribosome in the order IF-2 and IF-3, IF-1 and N-formylmethionyl-tRNA(fMet); mRNA recruitment can occur at any time during PIC assembly.

It is found in the cytoplasm. In terms of biological role, one of the essential components for the initiation of protein synthesis. Stabilizes the binding of IF-2 and IF-3 on the 30S subunit to which N-formylmethionyl-tRNA(fMet) subsequently binds. Helps modulate mRNA selection, yielding the 30S pre-initiation complex (PIC). Upon addition of the 50S ribosomal subunit IF-1, IF-2 and IF-3 are released leaving the mature 70S translation initiation complex. The polypeptide is Translation initiation factor IF-1 (Chlorobium luteolum (strain DSM 273 / BCRC 81028 / 2530) (Pelodictyon luteolum)).